The chain runs to 190 residues: MLSSVVIAASEEQHNPLIPEPADIVGSLICFVVILFFFWKLVLPRVKKLLDERAEAIEGNIAKADEAQHKAEALLEEYTAQLAEARADAAKIREQARTDGQKIVAEAKDTATAEAARVTASAQAQIEAERQTALVSLRGEVGSLAIDIASGVVGEVLTEDKKAQAIVDRFLADLEASEKATSNEKAGTAN.

A helical transmembrane segment spans residues 24–44; the sequence is IVGSLICFVVILFFFWKLVLP.

This sequence belongs to the ATPase B chain family. In terms of assembly, F-type ATPases have 2 components, F(1) - the catalytic core - and F(0) - the membrane proton channel. F(1) has five subunits: alpha(3), beta(3), gamma(1), delta(1), epsilon(1). F(0) has three main subunits: a(1), b(2) and c(10-14). The alpha and beta chains form an alternating ring which encloses part of the gamma chain. F(1) is attached to F(0) by a central stalk formed by the gamma and epsilon chains, while a peripheral stalk is formed by the delta and b chains.

The protein localises to the cell membrane. Its function is as follows. F(1)F(0) ATP synthase produces ATP from ADP in the presence of a proton or sodium gradient. F-type ATPases consist of two structural domains, F(1) containing the extramembraneous catalytic core and F(0) containing the membrane proton channel, linked together by a central stalk and a peripheral stalk. During catalysis, ATP synthesis in the catalytic domain of F(1) is coupled via a rotary mechanism of the central stalk subunits to proton translocation. Functionally, component of the F(0) channel, it forms part of the peripheral stalk, linking F(1) to F(0). In Leifsonia xyli subsp. xyli (strain CTCB07), this protein is ATP synthase subunit b.